We begin with the raw amino-acid sequence, 131 residues long: uncharacterized protein (131 aa).

An N-terminal signal peptide occupies residues 1 to 19 (MRESLFIIFFQFVCHSSNS). 2 helical membrane passes run 33–53 (PLLT…ALFF) and 111–131 (VSFN…FFLF).

The protein localises to the membrane. This is an uncharacterized protein from Saccharomyces cerevisiae (strain ATCC 204508 / S288c) (Baker's yeast).